A 361-amino-acid polypeptide reads, in one-letter code: Dual specificity mitogen-activated protein kinase kinase 6 (361 aa).

2 stretches are compositionally biased toward basic and acidic residues: residues 1-11 and 37-48; these read MEGGSDKESKV and PKELKLPKEVFE. Positions 1–61 are disordered; sequence MEGGSDKESK…PAPTPPRDLD (61 aa). Residues 30 to 46 are d domain; that stretch reads VRGKKKLPKELKLPKEV. The 262-residue stretch at 80 to 341 folds into the Protein kinase domain; that stretch reads LEQIGELGRG…YTELMQHPFF (262 aa). Residues 86-94 and Lys-109 each bind ATP; that span reads LGRGAYGVV. The active-site Proton acceptor is the Asp-206. The residue at position 234 (Ser-234) is a Phosphoserine; by MAPK3. Thr-238 is subject to Phosphothreonine; by MAPK3. The tract at residues 338-361 is DVD domain; that stretch reads HPFFTLHDSKDTDVASFVKTILGD.

Belongs to the protein kinase superfamily. STE Ser/Thr protein kinase family. MAP kinase kinase subfamily. In terms of assembly, dimer. Interacts (via its D domain) with its MAP kinase substrates. Interacts (via its DVD domain) with MAP3Ks activators. In terms of processing, weakly autophosphorylated. Phosphorylated at Ser-234 and Thr-238 by the majority of M3Ks.

It localises to the nucleus. It is found in the cytoplasm. The protein resides in the cytoskeleton. It carries out the reaction L-seryl-[protein] + ATP = O-phospho-L-seryl-[protein] + ADP + H(+). The enzyme catalyses L-threonyl-[protein] + ATP = O-phospho-L-threonyl-[protein] + ADP + H(+). It catalyses the reaction L-tyrosyl-[protein] + ATP = O-phospho-L-tyrosyl-[protein] + ADP + H(+). With respect to regulation, activated by dual phosphorylation on Ser-234 and Thr-238 in response to a variety of cellular stresses, including UV radiation, osmotic shock, hypoxia, inflammatory cytokines, interferon gamma (IFNG), and less often by growth factors. MAP2K6/MKK6 is activated by the majority of M3Ks. Its function is as follows. Dual specificity protein kinase which acts as an essential component of the MAP kinase signal transduction pathway. Catalyzes the concomitant phosphorylation of a threonine and a tyrosine residue in the MAP kinases p38 and plays an important role in the regulation of cellular responses to cytokines and all kinds of stresses. The p38 MAP kinase signal transduction pathway leads to direct activation of transcription factors. Phosphorylation by MAP2K6 asymmetrically activates p38 on one side of the blastodisc, an event which is necessary for blastomere cleavage. This chain is Dual specificity mitogen-activated protein kinase kinase 6, found in Danio rerio (Zebrafish).